The following is a 381-amino-acid chain: Guanine nucleotide-binding protein G(olf) subunit alpha (381 aa).

Residues 1–25 form a disordered region; the sequence is MGCLGNSSKTAEDQGVDEKERREAN. Residue G2 is the site of N-palmitoyl glycine attachment. Residue C3 is the site of S-palmitoyl cysteine attachment. Positions 10 to 25 are enriched in basic and acidic residues; it reads TAEDQGVDEKERREAN. The G-alpha domain maps to 41-381; sequence ATHRLLLLGA…RMHLKQYELL (341 aa). Positions 44–57 are G1 motif; sequence RLLLLGAGESGKST. E52, S53, G54, K55, S56, and T57 together coordinate GTP. Residue S56 participates in Mg(2+) binding. Position 178 is a phosphothreonine (T178). Residues 183–191 are G2 motif; the sequence is DLLRCRVLT. GTP-binding residues include L185, R186, and T191. 2 residues coordinate Mg(2+): T191 and D210. The segment at 206 to 215 is G3 motif; that stretch reads FHMFDVGGQR. Positions 213, 279, 280, 282, and 353 each coordinate GTP. The G4 motif stretch occupies residues 275–282; that stretch reads ILFLNKQD. The segment at 351–356 is G5 motif; the sequence is TCAVDT.

This sequence belongs to the G-alpha family. G(s) subfamily. G proteins are composed of 3 units; alpha, beta and gamma. The alpha chain contains the guanine nucleotide binding site. Interacts with GAS2L2. Interacts (GDP-bound form) with RIC8B (via C-terminus); promoting GNAL folding and association with the plasma membrane.

The protein localises to the cell membrane. It carries out the reaction GTP + H2O = GDP + phosphate + H(+). Functionally, guanine nucleotide-binding protein (G protein) involved as transducer in olfactory signal transduction controlled by G protein-coupled receptors (GPCRs). Contains the guanine nucleotide binding site and alternates between an active, GTP-bound state and an inactive, GDP-bound state. Signaling by an activated GPCR promotes GDP release and GTP binding. The alpha subunit has a low GTPase activity that converts bound GTP to GDP, thereby terminating the signal. Both GDP release and GTP hydrolysis are modulated by numerous regulatory proteins. GNAL/G(olf) alpha specifically mediates olfactory signal transduction within the olfactory neuroepithelium and the basal ganglia following GPCRs activation. Acts by promoting the specific activation of adenylyl cyclase ADCY3, resulting in increased levels of the signaling molecule cAMP. In Mus musculus (Mouse), this protein is Guanine nucleotide-binding protein G(olf) subunit alpha.